Here is a 333-residue protein sequence, read N- to C-terminus: Transcription factor HHO6 (333 aa).

Positions A189–R249 constitute an HTH myb-type domain. Residues P220–R245 constitute a DNA-binding region (H-T-H motif). A disordered region spans residues D274–P333. Polar residues predominate over residues R287–S303. The span at D319–P333 shows a compositional bias: basic and acidic residues.

It localises to the nucleus. In terms of biological role, probable transcription factor involved in phosphate signaling in roots. The polypeptide is Transcription factor HHO6 (Arabidopsis thaliana (Mouse-ear cress)).